A 322-amino-acid polypeptide reads, in one-letter code: Undecaprenyl-phosphate 4-deoxy-4-formamido-L-arabinose transferase (322 aa).

The Cytoplasmic portion of the chain corresponds to 1-235 (MFEIHPVKKV…TCLTTTPLRM (235 aa)). The helical transmembrane segment at 236-256 (LSLLGSIIAIGGFSIAVLLVI) threads the bilayer. Over 257-269 (LRLTFGPQWAAEG) the chain is Periplasmic. Residues 270-290 (VFMLFAVLFTFIGAQFIGMGL) form a helical membrane-spanning segment. Residues 291–322 (LGEYIGRIYTDVRARPRYFVQQVIRPSSKENE) lie on the Cytoplasmic side of the membrane.

This sequence belongs to the glycosyltransferase 2 family.

The protein localises to the cell inner membrane. It catalyses the reaction UDP-4-deoxy-4-formamido-beta-L-arabinose + di-trans,octa-cis-undecaprenyl phosphate = 4-deoxy-4-formamido-alpha-L-arabinopyranosyl di-trans,octa-cis-undecaprenyl phosphate + UDP. The protein operates within glycolipid biosynthesis; 4-amino-4-deoxy-alpha-L-arabinose undecaprenyl phosphate biosynthesis; 4-amino-4-deoxy-alpha-L-arabinose undecaprenyl phosphate from UDP-4-deoxy-4-formamido-beta-L-arabinose and undecaprenyl phosphate: step 1/2. It functions in the pathway bacterial outer membrane biogenesis; lipopolysaccharide biosynthesis. Catalyzes the transfer of 4-deoxy-4-formamido-L-arabinose from UDP to undecaprenyl phosphate. The modified arabinose is attached to lipid A and is required for resistance to polymyxin and cationic antimicrobial peptides. This Escherichia coli O17:K52:H18 (strain UMN026 / ExPEC) protein is Undecaprenyl-phosphate 4-deoxy-4-formamido-L-arabinose transferase.